Consider the following 169-residue polypeptide: E1B protein, small T-antigen (169 aa).

It belongs to the adenoviridae E1B 19 kDa protein family.

The polypeptide is E1B protein, small T-antigen (Canis lupus familiaris (Dog)).